The chain runs to 519 residues: Serine/threonine-protein kinase RIO1 (519 aa).

Positions 1 to 10 (MTPAPEPQDP) are enriched in pro residues. Positions 1-54 (MTPAPEPQDPPTIHEPVATEQTDDISDWDVESDYEDGYGAPSKSQAQGGASAAD) are disordered. Acidic residues predominate over residues 21 to 36 (QTDDISDWDVESDYED). Positions 39–53 (GAPSKSQAQGGASAA) are enriched in low complexity. A Protein kinase domain is found at 122 to 519 (SEIYGTISTG…KLVAANKKRK (398 aa)). The ATP site is built by Lys154 and Leu228. Residue Asp281 is the Proton acceptor of the active site. Residues Asn286 and Asp298 each coordinate Mg(2+). Catalysis depends on Asp298, which acts as the 4-aspartylphosphate intermediate. The segment at 418–519 (ADSKVPESTG…KLVAANKKRK (102 aa)) is disordered. Residues 439–464 (GSEDEEGDEGESGEVESGDEEREEGE) show a composition bias toward acidic residues. An association with (pre-)40S ribosomal particle region spans residues 440-519 (SEDEEGDEGE…KLVAANKKRK (80 aa)). Composition is skewed to basic residues over residues 470 to 489 (KKRP…AHKM) and 497 to 519 (EKRK…KKRK).

This sequence belongs to the protein kinase superfamily. RIO-type Ser/Thr kinase family. Mg(2+) serves as cofactor. Post-translationally, autophosphorylated.

The protein localises to the cytoplasm. The catalysed reaction is L-seryl-[protein] + ATP = O-phospho-L-seryl-[protein] + ADP + H(+). It catalyses the reaction L-threonyl-[protein] + ATP = O-phospho-L-threonyl-[protein] + ADP + H(+). It carries out the reaction ATP + H2O = ADP + phosphate + H(+). Functionally, involved in the final steps of cytoplasmic maturation of the 40S ribosomal subunit. In vitro, has strong ATPase activity and only low protein kinase activity. This is Serine/threonine-protein kinase RIO1 from Chaetomium thermophilum (strain DSM 1495 / CBS 144.50 / IMI 039719) (Thermochaetoides thermophila).